The chain runs to 82 residues: Large ribosomal subunit protein bL31B-2 (82 aa).

This sequence belongs to the bacterial ribosomal protein bL31 family. Type B subfamily. In terms of assembly, part of the 50S ribosomal subunit.

The polypeptide is Large ribosomal subunit protein bL31B-2 (Streptomyces avermitilis (strain ATCC 31267 / DSM 46492 / JCM 5070 / NBRC 14893 / NCIMB 12804 / NRRL 8165 / MA-4680)).